A 211-amino-acid chain; its full sequence is Ribosomal RNA small subunit methyltransferase G (211 aa).

Residues G78, M83, 129 to 130, and R144 contribute to the S-adenosyl-L-methionine site; that span reads AE.

It belongs to the methyltransferase superfamily. RNA methyltransferase RsmG family.

It localises to the cytoplasm. The enzyme catalyses guanosine(527) in 16S rRNA + S-adenosyl-L-methionine = N(7)-methylguanosine(527) in 16S rRNA + S-adenosyl-L-homocysteine. Its function is as follows. Specifically methylates the N7 position of guanine in position 527 of 16S rRNA. The protein is Ribosomal RNA small subunit methyltransferase G of Pseudomonas syringae pv. tomato (strain ATCC BAA-871 / DC3000).